The sequence spans 917 residues: MIAAQLLAYYFTELKDDQVKKIDKYLYAMRLSDETLIDIMTRFRKEMKNGLSRDFNPTATVKMLPTFVRSIPDGSEKGDFIALDLGGSSFRILRVQVNHEKNQNVHMESEVYDTPENIVHGSGSQLFDHVAECLGDFMEKRKIKDKKLPVGFTFSFPCQQSKIDEAILITWTKRFKASGVEGADVVKLLNKAIKKRGDYDANIVAVVNDTVGTMMTCGYDDQHCEVGLIIGTGTNACYMEELRHIDLVEGDEGRMCINTEWGAFGDDGSLEDIRTEFDREIDRGSLNPGKQLFEKMVSGMYLGELVRLILVKMAKEGLLFEGRITPELLTRGKFNTSDVSAIEKNKEGLHNAKEILTRLGVEPSDDDCVSVQHVCTIVSFRSANLVAATLGAILNRLRDNKGTPRLRTTVGVDGSLYKTHPQYSRRFHKTLRRLVPDSDVRFLLSESGSGKGAAMVTAVAYRLAEQHRQIEETLAHFHLTKDMLLEVKKRMRAEMELGLRKQTHNNAVVKMLPSFVRRTPDGTENGDFLALDLGGTNFRVLLVKIRSGKKRTVEMHNKIYAIPIEIMQGTGEELFDHIVSCISDFLDYMGIKGPRMPLGFTFSFPCQQTSLDAGILITWTKGFKATDCVGHDVVTLLRDAIKRREEFDLDVVAVVNDTVGTMMTCAYEEPTCEVGLIVGTGSNACYMEEMKNVEMVEGDQGQMCINMEWGAFGDNGCLDDIRTHYDRLVDEYSLNAGKQRYEKMISGMYLGEIVRNILIDFTKKGFLFRGQISETLKTRGIFETKFLSQIESDRLALLQVRAILQQLGLNSTCDDSILVKTVCGVVSRRAAQLCGAGMAAVVDKIRENRGLDRLNVTVGVDGTLYKLHPHFSRIMHQTVKELSPKCNVSFLLSEDGSGKGAALITAVGVRLRTEASS.

The residue at position 1 (Met1) is an N-acetylmethionine. The segment at 1 to 10 (MIAAQLLAYY) is mitochondrial-binding peptide (MBP). Hexokinase domains are found at residues 16–458 (DDQV…MVTA) and 464–906 (AEQH…LITA). ATP is bound by residues Arg30 and 84–89 (DLGGSS). Residues 73–207 (DGSEKGDFIA…DYDANIVAVV (135 aa)) form a hexokinase small subdomain 1 region. Residue 84 to 91 (DLGGSSFR) participates in D-glucose 6-phosphate binding. D-glucose is bound by residues Ser155, 172 to 173 (TK), and 208 to 209 (ND). The hexokinase large subdomain 1 stretch occupies residues 208 to 447 (NDTVGTMMTC…SDVRFLLSES (240 aa)). Residues Asp209 and Thr232 each contribute to the D-glucose 6-phosphate site. D-glucose contacts are provided by residues Asn235, Glu260, and 291–294 (QLFE). Ser337 bears the Phosphoserine mark. Asn345 contacts ATP. D-glucose 6-phosphate is bound at residue 413-415 (DGS). 425-426 (RR) contacts ATP. D-glucose 6-phosphate is bound by residues Ser449 and 532–536 (DLGGT). The interval 521–655 (DGTENGDFLA…EFDLDVVAVV (135 aa)) is hexokinase small subdomain 2. An ATP-binding site is contributed by 532–537 (DLGGTN). Residues 603–604 (SF), 620–621 (TK), and 656–657 (ND) contribute to the D-glucose site. The interval 656–895 (NDTVGTMMTC…CNVSFLLSED (240 aa)) is hexokinase large subdomain 2. D-glucose 6-phosphate-binding residues include Asp657 and Thr680. Thr680 contributes to the ATP binding site. Residues 682–683 (SN), Glu708, and Glu742 each bind D-glucose. Residues 747 to 748 (GM), 784 to 788 (TKFLS), and 863 to 867 (TLYKL) contribute to the ATP site. D-glucose 6-phosphate contacts are provided by residues 861-863 (DGT) and Ser897.

It belongs to the hexokinase family. As to quaternary structure, monomer. Interacts with RABL2/RABL2A; binds preferentially to GTP-bound RABL2. Interacts with VDAC1. The HK1-VDAC1 complex interacts with ATF2. Interacts (via N-terminal spermatogenic cell-specific region) with PFKM (via C-terminus). Interacts with SMAD5. Isoform 2: Erythrocyte specific. Isoform 3: Testis-specific. Isoform 4: Testis-specific.

Its subcellular location is the mitochondrion outer membrane. The protein resides in the cytoplasm. It is found in the cytosol. The catalysed reaction is a D-hexose + ATP = a D-hexose 6-phosphate + ADP + H(+). It catalyses the reaction D-fructose + ATP = D-fructose 6-phosphate + ADP + H(+). The enzyme catalyses D-glucose + ATP = D-glucose 6-phosphate + ADP + H(+). It carries out the reaction D-mannose + ATP = D-mannose 6-phosphate + ADP + H(+). The catalysed reaction is D-glucosamine + ATP = D-glucosamine 6-phosphate + ADP + H(+). The protein operates within carbohydrate metabolism; hexose metabolism. Its pathway is carbohydrate degradation; glycolysis; D-glyceraldehyde 3-phosphate and glycerone phosphate from D-glucose: step 1/4. Hexokinase is an allosteric enzyme inhibited by its product D-glucose 6-phosphate. Hexokinase activity is inhibited by N-acetyl-D-glucosamine. Catalyzes the phosphorylation of various hexoses, such as D-glucose, D-glucosamine, D-fructose, D-mannose and 2-deoxy-D-glucose, to hexose 6-phosphate (D-glucose 6-phosphate, D-glucosamine 6-phosphate, D-fructose 6-phosphate, D-mannose 6-phosphate and 2-deoxy-D-glucose 6-phosphate, respectively). Does not phosphorylate N-acetyl-D-glucosamine. Mediates the initial step of glycolysis by catalyzing phosphorylation of D-glucose to D-glucose 6-phosphate. Involved in innate immunity and inflammation by acting as a pattern recognition receptor for bacterial peptidoglycan. When released in the cytosol, N-acetyl-D-glucosamine component of bacterial peptidoglycan inhibits the hexokinase activity of HK1 and causes its dissociation from mitochondrial outer membrane, thereby activating the NLRP3 inflammasome. The chain is Hexokinase-1 from Homo sapiens (Human).